Here is a 455-residue protein sequence, read N- to C-terminus: Nucleolar protein 12 (455 aa).

Disordered stretches follow at residues methionine 1–asparagine 104 and glutamine 117–alanine 142. Residues asparagine 24–lysine 37 are compositionally biased toward basic and acidic residues. Residues proline 51 to alanine 66 show a composition bias toward polar residues. Residues glutamate 68 to glutamine 91 show a composition bias toward acidic residues. The span at serine 124–lysine 141 shows a compositional bias: basic and acidic residues. RRM domains are found at residues arginine 160–histidine 258 and arginine 266–serine 351. Disordered stretches follow at residues leucine 333–valine 402 and alanine 420–valine 455. The segment covering lysine 339–arginine 348 has biased composition (basic residues). Residues alanine 349–phenylalanine 363 show a composition bias toward polar residues. Residues lysine 425–isoleucine 438 show a composition bias toward basic residues. A compositionally biased stretch (basic and acidic residues) spans arginine 439–valine 455.

This sequence belongs to the RRM RBM34 family.

It localises to the nucleus. The protein localises to the nucleolus. Its function is as follows. Involved in pre-25S rRNA processing. This Candida albicans (strain SC5314 / ATCC MYA-2876) (Yeast) protein is Nucleolar protein 12 (NOP12).